A 586-amino-acid chain; its full sequence is Succinate dehydrogenase flavoprotein subunit (586 aa).

Residues 10-15 and 33-48 contribute to the FAD site; these read GGGLAG and SIVPVKRSHSVCAQGG. His-41 is modified (tele-8alpha-FAD histidine). Positions 236 and 250 each coordinate substrate. Arg-285 acts as the Proton acceptor in catalysis. His-352 lines the substrate pocket. Glu-376 is a binding site for FAD. Position 386 (Arg-386) interacts with substrate. FAD is bound at residue 391–392; the sequence is SL.

This sequence belongs to the FAD-dependent oxidoreductase 2 family. FRD/SDH subfamily. In terms of assembly, in B.subtilis succinate dehydrogenase forms part of an enzyme complex containing three subunits: a flavoprotein, an iron-sulfur protein and cytochrome b-558. Interacts with FloT. FAD serves as cofactor.

The protein localises to the cell membrane. Its subcellular location is the membrane raft. It carries out the reaction a quinone + succinate = fumarate + a quinol. It participates in carbohydrate metabolism; tricarboxylic acid cycle; fumarate from succinate (bacterial route): step 1/1. The chain is Succinate dehydrogenase flavoprotein subunit (sdhA) from Bacillus subtilis (strain 168).